Reading from the N-terminus, the 40-residue chain is Photosystem II reaction center protein J (40 aa).

Residues 8-28 traverse the membrane as a helical segment; the sequence is IPLWVVATIAGLGVITVVGIF.

This sequence belongs to the PsbJ family. In terms of assembly, PSII is composed of 1 copy each of membrane proteins PsbA, PsbB, PsbC, PsbD, PsbE, PsbF, PsbH, PsbI, PsbJ, PsbK, PsbL, PsbM, PsbT, PsbX, PsbY, PsbZ, Psb30/Ycf12, peripheral proteins PsbO, CyanoQ (PsbQ), PsbU, PsbV and a large number of cofactors. It forms dimeric complexes.

It localises to the cellular thylakoid membrane. In terms of biological role, one of the components of the core complex of photosystem II (PSII). PSII is a light-driven water:plastoquinone oxidoreductase that uses light energy to abstract electrons from H(2)O, generating O(2) and a proton gradient subsequently used for ATP formation. It consists of a core antenna complex that captures photons, and an electron transfer chain that converts photonic excitation into a charge separation. The sequence is that of Photosystem II reaction center protein J from Trichormus variabilis (strain ATCC 29413 / PCC 7937) (Anabaena variabilis).